The chain runs to 328 residues: DNA-directed RNA polymerase subunit alpha 2 (328 aa).

An alpha N-terminal domain (alpha-NTD) region spans residues 1-234; sequence MQGSVIEFLK…EQLDAFVDLR (234 aa). Positions 248 to 328 are alpha C-terminal domain (alpha-CTD); the sequence is FDPILLRPVD…NWPPASLSED (81 aa).

This sequence belongs to the RNA polymerase alpha chain family. Homodimer. The RNAP catalytic core consists of 2 alpha, 1 beta, 1 beta' and 1 omega subunit. When a sigma factor is associated with the core the holoenzyme is formed, which can initiate transcription.

It catalyses the reaction RNA(n) + a ribonucleoside 5'-triphosphate = RNA(n+1) + diphosphate. DNA-dependent RNA polymerase catalyzes the transcription of DNA into RNA using the four ribonucleoside triphosphates as substrates. The chain is DNA-directed RNA polymerase subunit alpha 2 from Psychromonas ingrahamii (strain DSM 17664 / CCUG 51855 / 37).